Here is a 258-residue protein sequence, read N- to C-terminus: Acyl-[acyl-carrier-protein]--UDP-N-acetylglucosamine O-acyltransferase (258 aa).

This sequence belongs to the transferase hexapeptide repeat family. LpxA subfamily. As to quaternary structure, homotrimer.

It is found in the cytoplasm. The catalysed reaction is a (3R)-hydroxyacyl-[ACP] + UDP-N-acetyl-alpha-D-glucosamine = a UDP-3-O-[(3R)-3-hydroxyacyl]-N-acetyl-alpha-D-glucosamine + holo-[ACP]. It functions in the pathway glycolipid biosynthesis; lipid IV(A) biosynthesis; lipid IV(A) from (3R)-3-hydroxytetradecanoyl-[acyl-carrier-protein] and UDP-N-acetyl-alpha-D-glucosamine: step 1/6. Involved in the biosynthesis of lipid A, a phosphorylated glycolipid that anchors the lipopolysaccharide to the outer membrane of the cell. In Pseudomonas putida (strain GB-1), this protein is Acyl-[acyl-carrier-protein]--UDP-N-acetylglucosamine O-acyltransferase.